The following is a 416-amino-acid chain: Gamma-glutamyl phosphate reductase (416 aa).

It belongs to the gamma-glutamyl phosphate reductase family.

The protein localises to the cytoplasm. The enzyme catalyses L-glutamate 5-semialdehyde + phosphate + NADP(+) = L-glutamyl 5-phosphate + NADPH + H(+). Its pathway is amino-acid biosynthesis; L-proline biosynthesis; L-glutamate 5-semialdehyde from L-glutamate: step 2/2. Catalyzes the NADPH-dependent reduction of L-glutamate 5-phosphate into L-glutamate 5-semialdehyde and phosphate. The product spontaneously undergoes cyclization to form 1-pyrroline-5-carboxylate. The chain is Gamma-glutamyl phosphate reductase from Salmonella typhi.